We begin with the raw amino-acid sequence, 298 residues long: Ribosomal RNA small subunit methyltransferase A (298 aa).

N35, L37, G62, E83, D108, and N133 together coordinate S-adenosyl-L-methionine.

It belongs to the class I-like SAM-binding methyltransferase superfamily. rRNA adenine N(6)-methyltransferase family. RsmA subfamily.

It localises to the cytoplasm. The catalysed reaction is adenosine(1518)/adenosine(1519) in 16S rRNA + 4 S-adenosyl-L-methionine = N(6)-dimethyladenosine(1518)/N(6)-dimethyladenosine(1519) in 16S rRNA + 4 S-adenosyl-L-homocysteine + 4 H(+). Its function is as follows. Specifically dimethylates two adjacent adenosines (A1518 and A1519) in the loop of a conserved hairpin near the 3'-end of 16S rRNA in the 30S particle. May play a critical role in biogenesis of 30S subunits. This chain is Ribosomal RNA small subunit methyltransferase A, found in Streptococcus pyogenes serotype M12 (strain MGAS9429).